The chain runs to 94 residues: Co-chaperonin GroES (94 aa).

It belongs to the GroES chaperonin family. As to quaternary structure, heptamer of 7 subunits arranged in a ring. Interacts with the chaperonin GroEL.

The protein resides in the cytoplasm. In terms of biological role, together with the chaperonin GroEL, plays an essential role in assisting protein folding. The GroEL-GroES system forms a nano-cage that allows encapsulation of the non-native substrate proteins and provides a physical environment optimized to promote and accelerate protein folding. GroES binds to the apical surface of the GroEL ring, thereby capping the opening of the GroEL channel. This chain is Co-chaperonin GroES, found in Brevibacillus choshinensis.